The following is a 134-amino-acid chain: U35-theraphotoxin-Cg1a (134 aa).

Residues 1–18 (MLVTLLETFSVVFQVANG) form the signal peptide. A propeptide spanning residues 19-56 (DGNCVPRFQDDVEFCDNYILEAVTEASKMIAPRAREQK) is cleaved from the precursor.

In terms of tissue distribution, expressed by the venom gland.

It localises to the secreted. In terms of biological role, probable secreted venom toxin. This chain is U35-theraphotoxin-Cg1a, found in Chilobrachys guangxiensis (Chinese earth tiger tarantula).